The following is a 141-amino-acid chain: Brain ribonuclease (141 aa).

The segment at 1-25 (KETAAAKFRRQHMDSGSSSSSNSNY) is disordered. Substrate-binding residues include Lys7 and Arg10. His12 acts as the Proton acceptor in catalysis. Over residues 15 to 24 (SGSSSSSNSN) the composition is skewed to low complexity. Disulfide bonds link Cys26–Cys84, Cys40–Cys95, Cys58–Cys110, and Cys65–Cys72. 41 to 45 (KPVNT) lines the substrate pocket. The N-linked (GlcNAc...) asparagine glycan is linked to Asn62. Positions 66 and 85 each coordinate substrate. The Proton donor role is filled by His119. Thr129 carries O-linked (GalNAc...) threonine glycosylation.

The protein belongs to the pancreatic ribonuclease family.

Its subcellular location is the secreted. The chain is Brain ribonuclease (BRN) from Giraffa camelopardalis (Giraffe).